Consider the following 261-residue polypeptide: tRNA pseudouridine synthase A (261 aa).

Asp-51 (nucleophile) is an active-site residue. Residue Tyr-109 coordinates substrate.

It belongs to the tRNA pseudouridine synthase TruA family. In terms of assembly, homodimer.

It catalyses the reaction uridine(38/39/40) in tRNA = pseudouridine(38/39/40) in tRNA. In terms of biological role, formation of pseudouridine at positions 38, 39 and 40 in the anticodon stem and loop of transfer RNAs. In Shewanella sp. (strain MR-4), this protein is tRNA pseudouridine synthase A.